The sequence spans 150 residues: Aspartate 1-decarboxylase 2 (150 aa).

Ser-24 acts as the Schiff-base intermediate with substrate; via pyruvic acid in catalysis. Pyruvic acid (Ser) is present on Ser-24. A substrate-binding site is contributed by Thr-56. Tyr-57 serves as the catalytic Proton donor. 72–74 (GAA) is a substrate binding site.

This sequence belongs to the PanD family. Heterooctamer of four alpha and four beta subunits. Pyruvate is required as a cofactor. In terms of processing, is synthesized initially as an inactive proenzyme, which is activated by self-cleavage at a specific serine bond to produce a beta-subunit with a hydroxyl group at its C-terminus and an alpha-subunit with a pyruvoyl group at its N-terminus.

The protein resides in the cytoplasm. It catalyses the reaction L-aspartate + H(+) = beta-alanine + CO2. Its pathway is cofactor biosynthesis; (R)-pantothenate biosynthesis; beta-alanine from L-aspartate: step 1/1. Catalyzes the pyruvoyl-dependent decarboxylation of aspartate to produce beta-alanine. The polypeptide is Aspartate 1-decarboxylase 2 (Mesorhizobium japonicum (strain LMG 29417 / CECT 9101 / MAFF 303099) (Mesorhizobium loti (strain MAFF 303099))).